A 415-amino-acid polypeptide reads, in one-letter code: Imidazolonepropionase (415 aa).

Fe(3+) is bound by residues His-75 and His-77. Zn(2+) is bound by residues His-75 and His-77. 3 residues coordinate 4-imidazolone-5-propanoate: Arg-84, Tyr-147, and His-180. N-formimidoyl-L-glutamate is bound at residue Tyr-147. Residue His-245 coordinates Fe(3+). His-245 contributes to the Zn(2+) binding site. Gln-248 contributes to the 4-imidazolone-5-propanoate binding site. Asp-320 serves as a coordination point for Fe(3+). Zn(2+) is bound at residue Asp-320. The N-formimidoyl-L-glutamate site is built by Asn-322 and Gly-324. Residue Thr-325 participates in 4-imidazolone-5-propanoate binding.

This sequence belongs to the metallo-dependent hydrolases superfamily. HutI family. Zn(2+) serves as cofactor. It depends on Fe(3+) as a cofactor.

Its subcellular location is the cytoplasm. The enzyme catalyses 4-imidazolone-5-propanoate + H2O = N-formimidoyl-L-glutamate. Its pathway is amino-acid degradation; L-histidine degradation into L-glutamate; N-formimidoyl-L-glutamate from L-histidine: step 3/3. Its function is as follows. Catalyzes the hydrolytic cleavage of the carbon-nitrogen bond in imidazolone-5-propanoate to yield N-formimidoyl-L-glutamate. It is the third step in the universal histidine degradation pathway. This Photorhabdus laumondii subsp. laumondii (strain DSM 15139 / CIP 105565 / TT01) (Photorhabdus luminescens subsp. laumondii) protein is Imidazolonepropionase.